The primary structure comprises 137 residues: MPTIQQLIRLGRSVKVSKTASPALEKCPQKRGVCTRVYTTTPKKPNSALRKVARVRLSNKVEVTAYIPGEGHNLQEHSIVLIRGGRVKDLPGVRYHIVRGSLDTSGVADRKQSRSKYGAKQPKAGAPAAPVKGKGKK.

Aspartate 89 carries the post-translational modification 3-methylthioaspartic acid. Residues serine 101–lysine 137 form a disordered region. A compositionally biased stretch (low complexity) spans lysine 116–lysine 137.

It belongs to the universal ribosomal protein uS12 family. As to quaternary structure, part of the 30S ribosomal subunit. Contacts proteins S8 and S17. May interact with IF1 in the 30S initiation complex.

With S4 and S5 plays an important role in translational accuracy. Its function is as follows. Interacts with and stabilizes bases of the 16S rRNA that are involved in tRNA selection in the A site and with the mRNA backbone. Located at the interface of the 30S and 50S subunits, it traverses the body of the 30S subunit contacting proteins on the other side and probably holding the rRNA structure together. The combined cluster of proteins S8, S12 and S17 appears to hold together the shoulder and platform of the 30S subunit. In Chlorobium chlorochromatii (strain CaD3), this protein is Small ribosomal subunit protein uS12.